The primary structure comprises 350 residues: Neutral protease 2 homolog SNOG_10522 (350 aa).

A signal peptide spans 1-18 (MKVSSQLAVAALASFATA). Residues 19-180 (ASVDVHKRET…AKALNKRTAI (162 aa)) constitute a propeptide that is removed on maturation. 2 cysteine pairs are disulfide-bonded: Cys-184–Cys-251 and Cys-258–Cys-276. Zn(2+) is bound at residue His-301. The active site involves Glu-302. Zn(2+) contacts are provided by His-305 and Asp-316.

It belongs to the peptidase M35 family. Zn(2+) serves as cofactor.

It localises to the secreted. The catalysed reaction is Preferential cleavage of bonds with hydrophobic residues in P1'. Also 3-Asn-|-Gln-4 and 8-Gly-|-Ser-9 bonds in insulin B chain.. Functionally, secreted metalloproteinase that allows assimilation of proteinaceous substrates. Shows high activities on basic nuclear substrates such as histone and protamine. This chain is Neutral protease 2 homolog SNOG_10522, found in Phaeosphaeria nodorum (strain SN15 / ATCC MYA-4574 / FGSC 10173) (Glume blotch fungus).